The sequence spans 327 residues: Glycerol-3-phosphate dehydrogenase [NAD(P)+] (327 aa).

3 residues coordinate NADPH: tryptophan 13, histidine 33, and lysine 102. 3 residues coordinate sn-glycerol 3-phosphate: lysine 102, glycine 130, and serine 132. Alanine 134 contacts NADPH. Sn-glycerol 3-phosphate-binding residues include lysine 185, aspartate 238, serine 248, arginine 249, and asparagine 250. Lysine 185 acts as the Proton acceptor in catalysis. Arginine 249 contacts NADPH. Glutamate 275 lines the NADPH pocket.

It belongs to the NAD-dependent glycerol-3-phosphate dehydrogenase family.

The protein resides in the cytoplasm. The enzyme catalyses sn-glycerol 3-phosphate + NAD(+) = dihydroxyacetone phosphate + NADH + H(+). It carries out the reaction sn-glycerol 3-phosphate + NADP(+) = dihydroxyacetone phosphate + NADPH + H(+). The protein operates within membrane lipid metabolism; glycerophospholipid metabolism. In terms of biological role, catalyzes the reduction of the glycolytic intermediate dihydroxyacetone phosphate (DHAP) to sn-glycerol 3-phosphate (G3P), the key precursor for phospholipid synthesis. This chain is Glycerol-3-phosphate dehydrogenase [NAD(P)+], found in Vesicomyosocius okutanii subsp. Calyptogena okutanii (strain HA).